Here is a 298-residue protein sequence, read N- to C-terminus: Small ribosomal subunit protein uS2 (298 aa).

Residues 232–298 (ETFEGDDIPS…TAEAEEPAAE (67 aa)) are disordered. Residues 234-250 (FEGDDIPSAIDFEDETP) are compositionally biased toward acidic residues. The span at 251–276 (EPVAEVADAEVAAAEPVAEAAPTAEA) shows a compositional bias: low complexity.

The protein belongs to the universal ribosomal protein uS2 family.

This Acaryochloris marina (strain MBIC 11017) protein is Small ribosomal subunit protein uS2.